Reading from the N-terminus, the 355-residue chain is MKIVADENLAFTDYFFSEFGDIQHKAGRTLTHTDVQDAEALLVRSVTAVNESLIQNTALKYVGSATIGTDHLDIQALEKHGITWANAAGCNAQAVAEYVITALLHLDASLLEQQEKFTLGIVGLGNVGKRLVYMAQLLGWKVIGFDPYVQLDSIENVSFQALLQQANAVSIHVPLTKKGEHATYHLFDEKAFAALQPNTILINSARGPVVKEAALIEDIQRTQRKVVLDVFEHEPVISEELLNMLALATPHIAGYSLEGKARGTQMIYEAFCQKFGYEINKRFETQLPACEDYFSGHDLKAVLKQKLSQIYDIAQDDANIRACVKEGKVEQKAFDLLRKNYPLRREWAAHGGPQA.

Serine 45 and threonine 66 together coordinate substrate. Aspartate 146 contacts NAD(+). The active site involves arginine 206. Aspartate 229 is an NAD(+) binding site. The active site involves glutamate 234. Catalysis depends on histidine 251, which acts as the Proton donor. Position 254 (glycine 254) interacts with NAD(+). A substrate-binding site is contributed by tyrosine 255.

It belongs to the D-isomer specific 2-hydroxyacid dehydrogenase family. PdxB subfamily. In terms of assembly, homodimer.

It is found in the cytoplasm. It carries out the reaction 4-phospho-D-erythronate + NAD(+) = (R)-3-hydroxy-2-oxo-4-phosphooxybutanoate + NADH + H(+). It functions in the pathway cofactor biosynthesis; pyridoxine 5'-phosphate biosynthesis; pyridoxine 5'-phosphate from D-erythrose 4-phosphate: step 2/5. Functionally, catalyzes the oxidation of erythronate-4-phosphate to 3-hydroxy-2-oxo-4-phosphonooxybutanoate. This Acinetobacter baumannii (strain AB307-0294) protein is Erythronate-4-phosphate dehydrogenase.